The sequence spans 272 residues: Formamidopyrimidine-DNA glycosylase (272 aa).

P2 serves as the catalytic Schiff-base intermediate with DNA. The active-site Proton donor is E3. Catalysis depends on K56, which acts as the Proton donor; for beta-elimination activity. Positions 89, 108, and 149 each coordinate DNA. The FPG-type zinc-finger motif lies at 234-268 (LAYGRAGEMCVNCETPLENLKLGQRASVFCPQCQP). The active-site Proton donor; for delta-elimination activity is R258.

The protein belongs to the FPG family. Monomer. Zn(2+) serves as cofactor.

It carries out the reaction Hydrolysis of DNA containing ring-opened 7-methylguanine residues, releasing 2,6-diamino-4-hydroxy-5-(N-methyl)formamidopyrimidine.. It catalyses the reaction 2'-deoxyribonucleotide-(2'-deoxyribose 5'-phosphate)-2'-deoxyribonucleotide-DNA = a 3'-end 2'-deoxyribonucleotide-(2,3-dehydro-2,3-deoxyribose 5'-phosphate)-DNA + a 5'-end 5'-phospho-2'-deoxyribonucleoside-DNA + H(+). Involved in base excision repair of DNA damaged by oxidation or by mutagenic agents. Acts as a DNA glycosylase that recognizes and removes damaged bases. Has a preference for oxidized purines, such as 7,8-dihydro-8-oxoguanine (8-oxoG). Has AP (apurinic/apyrimidinic) lyase activity and introduces nicks in the DNA strand. Cleaves the DNA backbone by beta-delta elimination to generate a single-strand break at the site of the removed base with both 3'- and 5'-phosphates. The protein is Formamidopyrimidine-DNA glycosylase of Acinetobacter baylyi (strain ATCC 33305 / BD413 / ADP1).